The primary structure comprises 1578 residues: Chitinase ChiA (1578 aa).

The N-terminal stretch at 1-19 (MKHYYRLLFLLLFPLLASA) is a signal peptide. Positions 25 to 466 (KKVVGYYAQW…NQVDTSFGSV (442 aa)) constitute a GH18 1 domain. The tract at residues 26–446 (KVVGYYAQWS…GGMIWELSQD (421 aa)) is GH18N. Residues 92 to 93 (DA) and 119 to 122 (GGWT) each bind chitin. E162 acts as the Proton donor in catalysis. Residues Y163, 249–252 (FGYD), and W441 contribute to the chitin site. One can recognise a CNA-B domain in the interval 485–536 (TDVTVELRNASNAVIQTVVSANGNFAFNNLTSGQNYSLTALKATYTFTPVTL). A GH18C region spans residues 1142–1462 (KIILGYAHSW…GLMTWSVNWD (321 aa)). Residues 1142 to 1483 (KIILGYAHSW…KAYAAYFASQ (342 aa)) form the GH18 2 domain. The Proton donor role is filled by E1264. Residues 1473-1578 (SKAYAAYFAS…KSFKVMNFLN (106 aa)) form a CTD region.

Belongs to the glycosyl hydrolase 18 family. Chitinase class II subfamily.

It is found in the secreted. The enzyme catalyses Random endo-hydrolysis of N-acetyl-beta-D-glucosaminide (1-&gt;4)-beta-linkages in chitin and chitodextrins.. Major extracellular chitinase, which is essential for chitin utilization. This is Chitinase ChiA (chiA) from Flavobacterium johnsoniae (strain ATCC 17061 / DSM 2064 / JCM 8514 / BCRC 14874 / CCUG 350202 / NBRC 14942 / NCIMB 11054 / UW101) (Cytophaga johnsonae).